The primary structure comprises 415 residues: MGTQFRKALTLTVTNFSQKSSPINSPPFPSGGCNWYIKFYPKGSADDNYLSLFLSPDDPKSLGLNWKRRANFYFVLLNQSGKELHRTPEIGDQWFCDDSLSWGFPQTLPRKKLLDKIFLDNDRFNIEIYIKVIEVVEGYHMFPASFTNKLLRSSLEYPDKSEKETVDINGFKVLSSQVTSVKRIFEEHPDIAEDFRSKNQVVKTEYMSVLLRVIETMAKPPQSISETELSNVHSELTELTEVGFKLEWLKAKLEEVCVAFKKANADGCRIQQLEEHVKNLEQTVSDLKVEMDKEKAKSTAKVLSLEDTLSDLKTELGKEKAKNATATDKFLLLKDTYSDLKVELEKEKAKSTSAAAKVLSLKEALSDLKVELDDQKIVNSATTANVLSWEDDDDLFSHTNCLGIQQKTNAYKRIN.

The MATH domain occupies 6–130; that stretch reads RKALTLTVTN…NDRFNIEIYI (125 aa). A coiled-coil region spans residues 244–341; it reads FKLEWLKAKL…LLKDTYSDLK (98 aa).

The sequence is that of MATH domain and coiled-coil domain-containing protein At2g42465 from Arabidopsis thaliana (Mouse-ear cress).